The chain runs to 296 residues: Nitrogenase iron protein 1 (296 aa).

An ATP-binding site is contributed by Gly-11 to Ser-18. Cys-99 lines the [4Fe-4S] cluster pocket. Arg-102 carries the ADP-ribosylarginine; by dinitrogenase reductase ADP-ribosyltransferase modification. Cys-133 serves as a coordination point for [4Fe-4S] cluster.

This sequence belongs to the NifH/BchL/ChlL family. Homodimer. [4Fe-4S] cluster is required as a cofactor. The reversible ADP-ribosylation of Arg-102 inactivates the nitrogenase reductase and regulates nitrogenase activity.

The catalysed reaction is N2 + 8 reduced [2Fe-2S]-[ferredoxin] + 16 ATP + 16 H2O = H2 + 8 oxidized [2Fe-2S]-[ferredoxin] + 2 NH4(+) + 16 ADP + 16 phosphate + 6 H(+). The key enzymatic reactions in nitrogen fixation are catalyzed by the nitrogenase complex, which has 2 components: the iron protein and the molybdenum-iron protein. This is Nitrogenase iron protein 1 (nifH1) from Azorhizobium caulinodans (strain ATCC 43989 / DSM 5975 / JCM 20966 / LMG 6465 / NBRC 14845 / NCIMB 13405 / ORS 571).